The sequence spans 430 residues: MTRSYEKSKQAYAEAVQLMPGGVNSPVRAFKSVNMDPIFMESGHGAIIKDIDGNEYIDYVLSWGPLILGHTHPEVVKAIAETAAKGSSFGAPTYTENRLAQLVLDRLPGMEMIRFVSSGTEATMSALRVARGVTGRDKILKFEGSYHGHGDSLLIKAGSGVATLGLPDSPGVPADVARNTLTVAYNDLEGAKAVFEKFGAELAAVIVEPVAGNMGVVPPQSGFLEGLRELTSTHGSLLIFDEVMTGFRVDYGCAQGYFGVTPDITTLGKVIGGGLPVGAFAGTKKIMEQVAPAGPIYQAGTLSGNPLAMTAGYETLSRLDRSTYEHFKQLGDQLEAGFREAATKYNIPHTVNRAGSMIGFFFTNEEVIDFATAKSSDLALFAEYFRLMAEEGIFLPPSQFEGLFISTAHTEEHIAKTVAAFHKVFAQLAK.

An N6-(pyridoxal phosphate)lysine modification is found at lysine 269.

This sequence belongs to the class-III pyridoxal-phosphate-dependent aminotransferase family. HemL subfamily. Homodimer. It depends on pyridoxal 5'-phosphate as a cofactor.

The protein localises to the cytoplasm. The catalysed reaction is (S)-4-amino-5-oxopentanoate = 5-aminolevulinate. Its pathway is porphyrin-containing compound metabolism; protoporphyrin-IX biosynthesis; 5-aminolevulinate from L-glutamyl-tRNA(Glu): step 2/2. In Lysinibacillus sphaericus (strain C3-41), this protein is Glutamate-1-semialdehyde 2,1-aminomutase 2.